The chain runs to 97 residues: MTKYEILYIIRPNIDEEAKTALVERFDAILTENGAANLESKDWEKRKLAYEINDFREGIYHIATFEAETTSEALSEFDRLAKINLDILRHMIVKVEA.

Belongs to the bacterial ribosomal protein bS6 family.

Functionally, binds together with bS18 to 16S ribosomal RNA. The polypeptide is Small ribosomal subunit protein bS6 (Lactococcus lactis subsp. cremoris (strain MG1363)).